Reading from the N-terminus, the 123-residue chain is Protein Wnt-7b (123 aa).

Residue Ser1 is the site of O-palmitoleoyl serine; by PORCN attachment. A disordered linker region spans residues Val33 to Thr61. Cysteines 89 and 104 form a disulfide. Asn90 carries an N-linked (GlcNAc...) asparagine glycan.

It belongs to the Wnt family. Palmitoleoylation is required for efficient binding to frizzled receptors. Depalmitoleoylation leads to Wnt signaling pathway inhibition.

It is found in the secreted. The protein resides in the extracellular space. It localises to the extracellular matrix. Functionally, ligand for members of the frizzled family of seven transmembrane receptors that functions in the canonical Wnt/beta-catenin signaling pathway. Required for normal fusion of the chorion and the allantois during placenta development. Required for central nervous system (CNS) angiogenesis and blood-brain barrier regulation. The protein is Protein Wnt-7b (WNT-7B) of Alopias vulpinus (Common thresher shark).